The sequence spans 1132 residues: Ubiquitin-associated protein 2 (1132 aa).

Residues 1–29 (MMTSVSNDRCRGAREKPQMPTAHAAQSQK) form a disordered region. Over residues 8–17 (DRCRGAREKP) the composition is skewed to basic and acidic residues. Residues 48 to 92 (KNDSDFEAKVKQLMEVTGKNQDECIVALHDCNGDVNKAINILLEG) enclose the UBA domain. Disordered stretches follow at residues 95 to 202 (DTTS…YSES), 221 to 248 (GTDE…YGLK), 331 to 351 (NNQM…SPQS), 380 to 479 (LKPP…STVS), 602 to 679 (TSSA…VSTL), 713 to 749 (PLSQ…VEST), 875 to 919 (PYSG…LNPG), 996 to 1033 (GGYG…GSVY), 1040 to 1059 (DKQG…SALG), and 1087 to 1132 (PHSQ…YWTN). Over residues 109–130 (FGRESSENKENREKRTEREASR) the composition is skewed to basic and acidic residues. Arginine 166 is subject to Omega-N-methylarginine. Basic residues predominate over residues 168 to 182 (KRARGRGFGRGRGRG). 2 stretches are compositionally biased toward polar residues: residues 233-244 (HSMSQEPPSKSS) and 331-340 (NNQMAPGTAN). Residues 341–351 (STSASSYSPQS) show a composition bias toward low complexity. The span at 392 to 404 (SSAQQNDTASPPA) shows a compositional bias: polar residues. Residues serine 433 and serine 440 each carry the phosphoserine modification. Low complexity-rich tracts occupy residues 436–448 (LSQL…HQTQ) and 602–618 (TSSA…SSSY). Positions 619-630 (DQSSVHTRIAYQ) are enriched in polar residues. Position 631 is a phosphoserine (serine 631). The span at 631 to 644 (SSASPPDSAPGSVA) shows a compositional bias: low complexity. The segment covering 652–662 (SQHTVDTTSSV) has biased composition (polar residues). The segment covering 713–722 (PLSQLSSSLS) has biased composition (low complexity). The span at 723-742 (GHQNSMTSAHATRSTSTPHT) shows a compositional bias: polar residues. The segment covering 897 to 914 (PAQAQQSQSQTHHTAQQP) has biased composition (low complexity). Residues 1101-1115 (PSGSGQRSQPSSLQP) show a composition bias toward low complexity. Over residues 1116–1132 (KSQASKPTYGSAPYWTN) the composition is skewed to polar residues.

As to quaternary structure, may interact with ANXA2.

The protein localises to the nucleus. The protein resides in the chromosome. It is found in the cytoplasm. Functionally, recruits the ubiquitination machinery to RNA polymerase II for polyubiquitination, removal and degradation, when the transcription-coupled nucleotide excision repair (TC-NER) machinery fails to resolve DNA damage. May promote the degradation of ANXA2. The polypeptide is Ubiquitin-associated protein 2 (Mus musculus (Mouse)).